Consider the following 347-residue polypeptide: S-adenosylmethionine decarboxylase proenzyme 4 (347 aa).

Residues Glu7 and Glu10 contribute to the active site. Residue Glu66 coordinates substrate. The active-site Schiff-base intermediate with substrate; via pyruvic acid is Ser67. Ser67 is subject to Pyruvic acid (Ser); by autocatalysis. The active-site Proton donor; for catalytic activity is Cys81. Catalysis depends on proton acceptor; for processing activity residues Ser237 and His250. Residue Glu254 participates in substrate binding.

It belongs to the eukaryotic AdoMetDC family. It depends on pyruvate as a cofactor. In terms of processing, is synthesized initially as an inactive proenzyme. Formation of the active enzyme involves a self-maturation process in which the active site pyruvoyl group is generated from an internal serine residue via an autocatalytic post-translational modification. Two non-identical subunits are generated from the proenzyme in this reaction, and the pyruvate is formed at the N-terminus of the alpha chain, which is derived from the carboxyl end of the proenzyme. The post-translation cleavage follows an unusual pathway, termed non-hydrolytic serinolysis, in which the side chain hydroxyl group of the serine supplies its oxygen atom to form the C-terminus of the beta chain, while the remainder of the serine residue undergoes an oxidative deamination to produce ammonia and the pyruvoyl group blocking the N-terminus of the alpha chain.

It catalyses the reaction S-adenosyl-L-methionine + H(+) = S-adenosyl 3-(methylsulfanyl)propylamine + CO2. It functions in the pathway amine and polyamine biosynthesis; S-adenosylmethioninamine biosynthesis; S-adenosylmethioninamine from S-adenosyl-L-methionine: step 1/1. Functionally, essential for biosynthesis of the polyamines spermidine and spermine. Essential for polyamine homeostasis, and normal plant embryogenesis, growth and development. This chain is S-adenosylmethionine decarboxylase proenzyme 4, found in Arabidopsis thaliana (Mouse-ear cress).